We begin with the raw amino-acid sequence, 146 residues long: Core protein OPG114 (146 aa).

Belongs to the orthopoxvirus OPG114 family. Part of a complex composed of the kinase OPG054, OPG092, OPG100, OPG114, OPG115, OPG142 and OPG157.

It is found in the virion. Functionally, late protein which is part of a large complex required for early virion morphogenesis. This complex participates in the formation of virosomes and the incorporation of virosomal contents into nascent immature virions. The polypeptide is Core protein OPG114 (OPG114) (Monkeypox virus).